The following is a 252-amino-acid chain: Ditrans,polycis-undecaprenyl-diphosphate synthase ((2E,6E)-farnesyl-diphosphate specific) (252 aa).

The active site involves aspartate 24. Aspartate 24 is a Mg(2+) binding site. Substrate contacts are provided by residues 25 to 28, tryptophan 29, arginine 37, histidine 41, and 69 to 71; these read GNGR and SSE. The active-site Proton acceptor is asparagine 72. Residues tryptophan 73, arginine 75, and arginine 192 each coordinate substrate. Mg(2+) is bound at residue histidine 197. 198–200 provides a ligand contact to substrate; it reads RIS. Glutamate 211 is a Mg(2+) binding site.

This sequence belongs to the UPP synthase family. As to quaternary structure, homodimer. Mg(2+) is required as a cofactor.

It catalyses the reaction 8 isopentenyl diphosphate + (2E,6E)-farnesyl diphosphate = di-trans,octa-cis-undecaprenyl diphosphate + 8 diphosphate. Functionally, catalyzes the sequential condensation of isopentenyl diphosphate (IPP) with (2E,6E)-farnesyl diphosphate (E,E-FPP) to yield (2Z,6Z,10Z,14Z,18Z,22Z,26Z,30Z,34E,38E)-undecaprenyl diphosphate (di-trans,octa-cis-UPP). UPP is the precursor of glycosyl carrier lipid in the biosynthesis of bacterial cell wall polysaccharide components such as peptidoglycan and lipopolysaccharide. The polypeptide is Ditrans,polycis-undecaprenyl-diphosphate synthase ((2E,6E)-farnesyl-diphosphate specific) (Yersinia pestis).